We begin with the raw amino-acid sequence, 85 residues long: Granaticin polyketide synthase acyl carrier protein (85 aa).

Positions 3–81 (RLTLDGLRTI…VLLDLVNGAQ (79 aa)) constitute a Carrier domain. Ser-41 carries the post-translational modification O-(pantetheine 4'-phosphoryl)serine.

4'-phosphopantetheine is transferred from CoA to a specific serine of the apo-ACP-like protein.

The protein operates within antibiotic biosynthesis; granaticin biosynthesis. Acyl carrier protein. This is Granaticin polyketide synthase acyl carrier protein from Streptomyces violaceoruber.